Consider the following 278-residue polypeptide: 2-dehydro-3-deoxyphosphooctonate aldolase (278 aa).

Belongs to the KdsA family.

The protein localises to the cytoplasm. The catalysed reaction is D-arabinose 5-phosphate + phosphoenolpyruvate + H2O = 3-deoxy-alpha-D-manno-2-octulosonate-8-phosphate + phosphate. The protein operates within carbohydrate biosynthesis; 3-deoxy-D-manno-octulosonate biosynthesis; 3-deoxy-D-manno-octulosonate from D-ribulose 5-phosphate: step 2/3. It participates in bacterial outer membrane biogenesis; lipopolysaccharide biosynthesis. The sequence is that of 2-dehydro-3-deoxyphosphooctonate aldolase from Dechloromonas aromatica (strain RCB).